Consider the following 238-residue polypeptide: Ribonuclease PH (238 aa).

Residues Arg-86 and 124-126 (GTR) each bind phosphate.

This sequence belongs to the RNase PH family. In terms of assembly, homohexameric ring arranged as a trimer of dimers.

It carries out the reaction tRNA(n+1) + phosphate = tRNA(n) + a ribonucleoside 5'-diphosphate. Its function is as follows. Phosphorolytic 3'-5' exoribonuclease that plays an important role in tRNA 3'-end maturation. Removes nucleotide residues following the 3'-CCA terminus of tRNAs; can also add nucleotides to the ends of RNA molecules by using nucleoside diphosphates as substrates, but this may not be physiologically important. Probably plays a role in initiation of 16S rRNA degradation (leading to ribosome degradation) during starvation. This Citrobacter koseri (strain ATCC BAA-895 / CDC 4225-83 / SGSC4696) protein is Ribonuclease PH.